The sequence spans 340 residues: Phosphoribosylformylglycinamidine cyclo-ligase (340 aa).

This sequence belongs to the AIR synthase family.

Its subcellular location is the cytoplasm. The enzyme catalyses 2-formamido-N(1)-(5-O-phospho-beta-D-ribosyl)acetamidine + ATP = 5-amino-1-(5-phospho-beta-D-ribosyl)imidazole + ADP + phosphate + H(+). It functions in the pathway purine metabolism; IMP biosynthesis via de novo pathway; 5-amino-1-(5-phospho-D-ribosyl)imidazole from N(2)-formyl-N(1)-(5-phospho-D-ribosyl)glycinamide: step 2/2. This Lactococcus lactis subsp. cremoris (strain MG1363) protein is Phosphoribosylformylglycinamidine cyclo-ligase.